Here is a 161-residue protein sequence, read N- to C-terminus: 18.1 kDa class I heat shock protein (161 aa).

The sHSP domain occupies 45 to 160 (DVAAFTNARV…QVKSIDISGA (116 aa)).

The protein belongs to the small heat shock protein (HSP20) family. May form oligomeric structures. Binds to AKR2A.

The protein localises to the cytoplasm. In Arabidopsis thaliana (Mouse-ear cress), this protein is 18.1 kDa class I heat shock protein (HSP18.1).